The following is a 232-amino-acid chain: Thiamine import ATP-binding protein ThiQ (232 aa).

In terms of domain architecture, ABC transporter spans 2 to 230; sequence LKLTDITWLY…KASASAILGI (229 aa). 32–39 is an ATP binding site; the sequence is GPSGAGKS.

This sequence belongs to the ABC transporter superfamily. Thiamine importer (TC 3.A.1.19.1) family. In terms of assembly, the complex is composed of two ATP-binding proteins (ThiQ), two transmembrane proteins (ThiP) and a solute-binding protein (ThiB).

The protein resides in the cell inner membrane. The catalysed reaction is thiamine(out) + ATP + H2O = thiamine(in) + ADP + phosphate + H(+). Functionally, part of the ABC transporter complex ThiBPQ involved in thiamine import. Responsible for energy coupling to the transport system. The protein is Thiamine import ATP-binding protein ThiQ of Shigella flexneri serotype 5b (strain 8401).